Here is a 435-residue protein sequence, read N- to C-terminus: Tol-Pal system protein TolB (435 aa).

The signal sequence occupies residues 1 to 28 (MTKCSFFRAILVAVGLMTAAVFATPANA). The tract at residues 288 to 310 (STAAIDTSPSYSPDGARVSFESD) is disordered.

This sequence belongs to the TolB family. In terms of assembly, the Tol-Pal system is composed of five core proteins: the inner membrane proteins TolA, TolQ and TolR, the periplasmic protein TolB and the outer membrane protein Pal. They form a network linking the inner and outer membranes and the peptidoglycan layer.

The protein localises to the periplasm. In terms of biological role, part of the Tol-Pal system, which plays a role in outer membrane invagination during cell division and is important for maintaining outer membrane integrity. The sequence is that of Tol-Pal system protein TolB from Rhizobium johnstonii (strain DSM 114642 / LMG 32736 / 3841) (Rhizobium leguminosarum bv. viciae).